We begin with the raw amino-acid sequence, 512 residues long: MDQPAGLQVDYVFRGVEHAVRVMVSGQVLELEVEDRMTADQWRGEFDAGFIEDLTHKTGNFKQFNIFCHMLESALTQSSESVTLDLLTYTDLESLRNRKMGGRPGSLAPRSAQLNSKRYLILIYSVEFDRIHYPLPLPYQGKPDPVVLQGIIRSLKEELGRLQGLDGQNTRDTRENEIWHLREQVSRLASEKRELEAQLGRSREEALAGRAARQEAEALRGLVRGLELELRQERGLGHRVAGRRGQDCRRLAKELEEAKASERSLRARLKTLTSELALYKRGRRTPPVQPPPTREDRASSSRERSASRGRGAARSSSRESGRGSRGRGRPARPSPSPTGGRALRFDPTAFVKAKERKQREIQMKQQQRNRLGSGGSGDGPSVSWSRQTQPPAALTGRGDAPNRSRNRSSSVDSFRSRCSSASSCSDLEDFSESLSRGGHRRRGKPPSPTPWSGSNMKSPPVERSHHQKSLANSGGWVPIKEYSSEHQAADMAEIDARLKALQEYMNRLDMRS.

M1 bears the N-acetylmethionine mark. The head domain stretch occupies residues M1–P143. Coiled-coil stretches lie at residues I178–E205 and C248–E275. A disordered region spans residues L276–V477. T285 is modified (phosphothreonine). Residues T293–A306 show a composition bias toward basic and acidic residues. 4 positions are modified to phosphoserine: S334, S336, S373, and S376. Residues R407–S425 are compositionally biased toward low complexity. 2 positions are modified to phosphoserine: S447 and S473.

It belongs to the CCDC61 family. As to quaternary structure, forms homodimers (via head domain). Interacts with CEP170. Interacts with PCM1 and CEP131. Binds tubulin.

Its subcellular location is the cytoplasm. The protein localises to the cytoskeleton. It localises to the microtubule organizing center. The protein resides in the centrosome. It is found in the centriolar satellite. Its subcellular location is the cilium basal body. Functionally, microtubule-binding centrosomal protein required for centriole cohesion, independently of the centrosome-associated protein/CEP250 and rootletin/CROCC linker. In interphase, required for anchoring microtubule at the mother centriole subdistal appendages and for centrosome positioning. During mitosis, may be involved in spindle assembly and chromatin alignment by regulating the organization of spindle microtubules into a symmetrical structure. Has been proposed to play a role in CEP170 recruitment to centrosomes. However, this function could not be confirmed. Plays a non-essential role in ciliogenesis. The sequence is that of Centrosomal protein CCDC61 from Homo sapiens (Human).